The primary structure comprises 270 residues: Insulin-like growth factor-binding protein-like 1 (270 aa).

The first 17 residues, 1–17, serve as a signal peptide directing secretion; the sequence is MPRLPLLLLLLPSLARG. Residues 26 to 101 enclose the IGFBP N-terminal domain; it reads RHPECSPCQQ…PEGTGLCVCA (76 aa). Intrachain disulfides connect Cys30–Cys55, Cys33–Cys57, Cys38–Cys58, Cys44–Cys61, Cys69–Cys83, Cys77–Cys98, and Cys107–Cys143. Residues 87 to 145 enclose the Kazal-like domain; sequence ASGTAPEGTGLCVCAQRGAVCGSDGRSYSSICALRLRARHAPRAHHGHLHKARDGPCEF. The 105-residue stretch at 147 to 251 folds into the Ig-like C2-type domain; sequence PVVLMPPRDI…GEAQSHGTVT (105 aa). Asn158 carries an N-linked (GlcNAc...) asparagine glycan. Residues Cys168 and Cys235 are joined by a disulfide bond.

The protein localises to the secreted. Functionally, IGF-binding proteins prolong the half-life of IGFs and have been shown to either inhibit or stimulate the growth promoting effects of the IGFs in cell culture. They alter the interaction of IGFs with their cell surface receptors. This chain is Insulin-like growth factor-binding protein-like 1 (Igfbpl1), found in Mus musculus (Mouse).